We begin with the raw amino-acid sequence, 78 residues long: NAD(P)H-quinone oxidoreductase subunit O (78 aa).

Belongs to the complex I NdhO subunit family. NDH-1 can be composed of about 15 different subunits; different subcomplexes with different compositions have been identified which probably have different functions.

It is found in the cellular thylakoid membrane. The catalysed reaction is a plastoquinone + NADH + (n+1) H(+)(in) = a plastoquinol + NAD(+) + n H(+)(out). The enzyme catalyses a plastoquinone + NADPH + (n+1) H(+)(in) = a plastoquinol + NADP(+) + n H(+)(out). In terms of biological role, NDH-1 shuttles electrons from an unknown electron donor, via FMN and iron-sulfur (Fe-S) centers, to quinones in the respiratory and/or the photosynthetic chain. The immediate electron acceptor for the enzyme in this species is believed to be plastoquinone. Couples the redox reaction to proton translocation, and thus conserves the redox energy in a proton gradient. Cyanobacterial NDH-1 also plays a role in inorganic carbon-concentration. This chain is NAD(P)H-quinone oxidoreductase subunit O, found in Prochlorococcus marinus (strain MIT 9215).